We begin with the raw amino-acid sequence, 271 residues long: Ribosomal RNA small subunit methyltransferase A (271 aa).

S-adenosyl-L-methionine-binding residues include His-11, Leu-13, Gly-38, Glu-58, Asp-86, and Asn-101.

The protein belongs to the class I-like SAM-binding methyltransferase superfamily. rRNA adenine N(6)-methyltransferase family. RsmA subfamily.

It localises to the cytoplasm. It carries out the reaction adenosine(1518)/adenosine(1519) in 16S rRNA + 4 S-adenosyl-L-methionine = N(6)-dimethyladenosine(1518)/N(6)-dimethyladenosine(1519) in 16S rRNA + 4 S-adenosyl-L-homocysteine + 4 H(+). Functionally, specifically dimethylates two adjacent adenosines (A1518 and A1519) in the loop of a conserved hairpin near the 3'-end of 16S rRNA in the 30S particle. May play a critical role in biogenesis of 30S subunits. The protein is Ribosomal RNA small subunit methyltransferase A of Helicobacter pylori (strain HPAG1).